We begin with the raw amino-acid sequence, 225 residues long: Thymidylate kinase (225 aa).

An ATP-binding site is contributed by 9–16 (GIEGCGKT).

Belongs to the thymidylate kinase family.

The catalysed reaction is dTMP + ATP = dTDP + ADP. In terms of biological role, phosphorylation of dTMP to form dTDP in both de novo and salvage pathways of dTTP synthesis. In Geobacter sp. (strain M21), this protein is Thymidylate kinase.